A 236-amino-acid polypeptide reads, in one-letter code: Phosphoribosylaminoimidazole-succinocarboxamide synthase (236 aa).

Belongs to the SAICAR synthetase family.

The enzyme catalyses 5-amino-1-(5-phospho-D-ribosyl)imidazole-4-carboxylate + L-aspartate + ATP = (2S)-2-[5-amino-1-(5-phospho-beta-D-ribosyl)imidazole-4-carboxamido]succinate + ADP + phosphate + 2 H(+). It functions in the pathway purine metabolism; IMP biosynthesis via de novo pathway; 5-amino-1-(5-phospho-D-ribosyl)imidazole-4-carboxamide from 5-amino-1-(5-phospho-D-ribosyl)imidazole-4-carboxylate: step 1/2. This Lysinibacillus sphaericus (strain C3-41) protein is Phosphoribosylaminoimidazole-succinocarboxamide synthase.